The sequence spans 266 residues: GATA zinc finger domain-containing protein 1 (266 aa).

The GATA-type zinc-finger motif lies at 9-33 (CSMCKTTSSSMWKKSPQGEILCHHC). Residues 59-72 (TTTFATTSAGPSQS) are compositionally biased toward low complexity. The disordered stretch occupies residues 59–112 (TTTFATTSAGPSQSNGGGGGKQSKQEIHRRSARLRNTKYKSAPAAEKKVSTKGK). K259 participates in a covalent cross-link: Glycyl lysine isopeptide (Lys-Gly) (interchain with G-Cter in SUMO2).

In terms of assembly, component of a chromatin complex, at least composed of KDM5A, GATAD1 and EMSY. In terms of tissue distribution, expressed in the eye (lens, ciliary body, retina, sclera and conjunctiva) at postnatal day 2 and 10. Not detected anywhere at postnatal day 14.

Its subcellular location is the nucleus. In terms of biological role, component of some chromatin complex recruited to chromatin sites methylated 'Lys-4' of histone H3 (H3K4me), with a preference for trimethylated form (H3K4me3). The sequence is that of GATA zinc finger domain-containing protein 1 (Gatad1) from Mus musculus (Mouse).